Consider the following 111-residue polypeptide: Cornifelin homolog B (111 aa).

This sequence belongs to the cornifelin family.

This is Cornifelin homolog B (cnfn-b) from Xenopus laevis (African clawed frog).